The primary structure comprises 597 residues: Arginine--tRNA ligase (597 aa).

A 'HIGH' region motif is present at residues 125-135; the sequence is PNTNKPLHLGH.

It belongs to the class-I aminoacyl-tRNA synthetase family. In terms of assembly, monomer.

It localises to the cytoplasm. It carries out the reaction tRNA(Arg) + L-arginine + ATP = L-arginyl-tRNA(Arg) + AMP + diphosphate. The polypeptide is Arginine--tRNA ligase (Bacteroides fragilis (strain ATCC 25285 / DSM 2151 / CCUG 4856 / JCM 11019 / LMG 10263 / NCTC 9343 / Onslow / VPI 2553 / EN-2)).